A 97-amino-acid chain; its full sequence is Co-chaperonin GroES (97 aa).

This sequence belongs to the GroES chaperonin family. In terms of assembly, heptamer of 7 subunits arranged in a ring. Interacts with the chaperonin GroEL.

The protein resides in the cytoplasm. Its function is as follows. Together with the chaperonin GroEL, plays an essential role in assisting protein folding. The GroEL-GroES system forms a nano-cage that allows encapsulation of the non-native substrate proteins and provides a physical environment optimized to promote and accelerate protein folding. GroES binds to the apical surface of the GroEL ring, thereby capping the opening of the GroEL channel. The chain is Co-chaperonin GroES from Pseudomonas putida (strain ATCC 700007 / DSM 6899 / JCM 31910 / BCRC 17059 / LMG 24140 / F1).